The primary structure comprises 182 residues: Oligoribonuclease (182 aa).

The Exonuclease domain occupies 8 to 171 (LIWIDLEMTG…DDIRESIKEL (164 aa)). The active site involves Tyr129.

The protein belongs to the oligoribonuclease family.

The protein resides in the cytoplasm. Its function is as follows. 3'-to-5' exoribonuclease specific for small oligoribonucleotides. The protein is Oligoribonuclease (orn) of Haemophilus influenzae (strain ATCC 51907 / DSM 11121 / KW20 / Rd).